Here is a 478-residue protein sequence, read N- to C-terminus: PTS system mannitol-specific EIICB component (478 aa).

At 1–29 the chain is on the cytoplasmic side; sequence MQQQEQQQGGMKVKVQRFGSYLSGMIMPN. The region spanning 18–347 is the PTS EIIC type-2 domain; the sequence is FGSYLSGMIM…VILKSSKASE (330 aa). A helical membrane pass occupies residues 30 to 51; the sequence is IGAFIAWGIITALFIPAGWFPN. The Extracellular portion of the chain corresponds to 52–55; sequence EQLN. A helical transmembrane segment spans residues 56-76; that stretch reads TLVSPMITYLLPLLIAYTGGK. The Cytoplasmic portion of the chain corresponds to 77–139; it reads MIYDHRGGVV…QGFEMLINNF (63 aa). A helical membrane pass occupies residues 140-161; it reads TAGIVGAALTILAFYAIGPVVL. Over 162–170 the chain is Extracellular; sequence TLNKLLAAG. Residues 171–191 traverse the membrane as a helical segment; that stretch reads VEVIVHANLLPVASVFVEPAK. Residues 192–278 are Cytoplasmic-facing; that stretch reads VLFLNNAINH…ILMKPALILA (87 aa). The chain crosses the membrane as a helical span at residues 279 to 298; it reads AIAGGASGLLTFTIFNAGLV. The Extracellular portion of the chain corresponds to 299–318; it reads AAASPGSIIALMAMTPRGGY. The chain crosses the membrane as a helical span at residues 319 to 340; it reads FGVLAGVLVAAAVSFIVSAVIL. The Cytoplasmic portion of the chain corresponds to 341 to 478; the sequence is KSSKASEEDL…YDELIEKLKK (138 aa). Positions 390–478 constitute a PTS EIIB type-2 domain; it reads NKIIFACDAG…YDELIEKLKK (89 aa). Residue cysteine 396 is the Phosphocysteine intermediate; for EIIB activity of the active site. Cysteine 396 carries the post-translational modification Phosphocysteine; by EIIA.

As to quaternary structure, homodimer.

The protein resides in the cell membrane. It catalyses the reaction D-mannitol(out) + N(pros)-phospho-L-histidyl-[protein] = D-mannitol 1-phosphate(in) + L-histidyl-[protein]. In terms of biological role, the phosphoenolpyruvate-dependent sugar phosphotransferase system (sugar PTS), a major carbohydrate active transport system, catalyzes the phosphorylation of incoming sugar substrates concomitantly with their translocation across the cell membrane. The enzyme II CmtAB PTS system is involved in D-mannitol transport. The protein is PTS system mannitol-specific EIICB component of Bacillus subtilis (strain 168).